Consider the following 448-residue polypeptide: Phosphoglucosamine mutase (448 aa).

Ser-101 (phosphoserine intermediate) is an active-site residue. Residues Ser-101, Asp-241, Asp-243, and Asp-245 each contribute to the Mg(2+) site. Position 101 is a phosphoserine (Ser-101).

The protein belongs to the phosphohexose mutase family. It depends on Mg(2+) as a cofactor. In terms of processing, activated by phosphorylation.

The enzyme catalyses alpha-D-glucosamine 1-phosphate = D-glucosamine 6-phosphate. Functionally, catalyzes the conversion of glucosamine-6-phosphate to glucosamine-1-phosphate. The sequence is that of Phosphoglucosamine mutase from Macrococcus caseolyticus (strain JCSC5402) (Macrococcoides caseolyticum).